The sequence spans 89 residues: Small ribosomal subunit protein uS15 (89 aa).

Belongs to the universal ribosomal protein uS15 family. Part of the 30S ribosomal subunit. Forms a bridge to the 50S subunit in the 70S ribosome, contacting the 23S rRNA.

Functionally, one of the primary rRNA binding proteins, it binds directly to 16S rRNA where it helps nucleate assembly of the platform of the 30S subunit by binding and bridging several RNA helices of the 16S rRNA. In terms of biological role, forms an intersubunit bridge (bridge B4) with the 23S rRNA of the 50S subunit in the ribosome. This is Small ribosomal subunit protein uS15 from Arthrobacter sp. (strain FB24).